Here is a 131-residue protein sequence, read N- to C-terminus: Putative pre-16S rRNA nuclease (131 aa).

The protein belongs to the YqgF nuclease family.

The protein resides in the cytoplasm. In terms of biological role, could be a nuclease involved in processing of the 5'-end of pre-16S rRNA. The polypeptide is Putative pre-16S rRNA nuclease (Bordetella avium (strain 197N)).